The chain runs to 95 residues: Small ribosomal subunit protein bS6 (95 aa).

The protein belongs to the bacterial ribosomal protein bS6 family.

Its function is as follows. Binds together with bS18 to 16S ribosomal RNA. The protein is Small ribosomal subunit protein bS6 of Caldanaerobacter subterraneus subsp. tengcongensis (strain DSM 15242 / JCM 11007 / NBRC 100824 / MB4) (Thermoanaerobacter tengcongensis).